A 245-amino-acid chain; its full sequence is Cytochrome P450 CYP82H23 (245 aa).

This sequence belongs to the cytochrome P450 family. Heme serves as cofactor.

In terms of biological role, probable heme-thiolate monooxygenase. The polypeptide is Cytochrome P450 CYP82H23 (Panax ginseng (Korean ginseng)).